The following is a 318-amino-acid chain: Isoflavone reductase (318 aa).

NADP(+) contacts are provided by residues 11–17 (GPTGAIG), Arg-36, and Lys-44. Lys-144 acts as the Proton acceptor in catalysis. NADP(+) is bound at residue Arg-148.

It belongs to the NmrA-type oxidoreductase family. Isoflavone reductase subfamily.

The catalysed reaction is (3R)-vestitone + NADP(+) = 2'-hydroxyformononetin + NADPH + 2 H(+). The protein operates within phytoalexin biosynthesis; pterocarpan phytoalexin biosynthesis. Reduces achiral isoflavones to chiral isoflavanones during the biosynthesis of chiral pterocarpan phytoalexins. The reduction product is a third isomer, which represents the penultimate intermediate in the synthesis of the phytoalexin (-)-medicarpin, the major phytoalexin in Alfalfa. In Medicago sativa (Alfalfa), this protein is Isoflavone reductase.